The primary structure comprises 286 residues: Bifunctional protein FolD (286 aa).

Residues 165 to 167 (GRS), Ser-190, and Val-231 contribute to the NADP(+) site.

This sequence belongs to the tetrahydrofolate dehydrogenase/cyclohydrolase family. In terms of assembly, homodimer.

It catalyses the reaction (6R)-5,10-methylene-5,6,7,8-tetrahydrofolate + NADP(+) = (6R)-5,10-methenyltetrahydrofolate + NADPH. It carries out the reaction (6R)-5,10-methenyltetrahydrofolate + H2O = (6R)-10-formyltetrahydrofolate + H(+). The protein operates within one-carbon metabolism; tetrahydrofolate interconversion. In terms of biological role, catalyzes the oxidation of 5,10-methylenetetrahydrofolate to 5,10-methenyltetrahydrofolate and then the hydrolysis of 5,10-methenyltetrahydrofolate to 10-formyltetrahydrofolate. This Bacillus thuringiensis (strain Al Hakam) protein is Bifunctional protein FolD.